The sequence spans 396 residues: Subtilisin-like protease 5 (396 aa).

A signal peptide spans 1–20 (MTGFLTILSLSLAALSVTNA). A propeptide spanning residues 21-116 (AQILSVPQGA…VEPDAIIKQH (96 aa)) is cleaved from the precursor. Residues 37 to 114 (YIVVMKDDTS…AFVEPDAIIK (78 aa)) form the Inhibitor I9 domain. Residues 125–396 (PWGLSRLSNR…SRLLYNGSGR (272 aa)) form the Peptidase S8 domain. Active-site charge relay system residues include aspartate 156 and histidine 187. Residues asparagine 230 and asparagine 248 are each glycosylated (N-linked (GlcNAc...) asparagine). Residue serine 342 is the Charge relay system of the active site. The tract at residues 376–396 (PTIRNPGPDTTSRLLYNGSGR) is disordered. N-linked (GlcNAc...) asparagine glycosylation is present at asparagine 392.

Belongs to the peptidase S8 family.

The protein resides in the secreted. Its function is as follows. Secreted subtilisin-like serine protease with keratinolytic activity that contributes to pathogenicity. The protein is Subtilisin-like protease 5 (SUB5) of Arthroderma gypseum (strain ATCC MYA-4604 / CBS 118893) (Microsporum gypseum).